We begin with the raw amino-acid sequence, 317 residues long: tRNA dimethylallyltransferase (317 aa).

ATP is bound at residue 14 to 21 (GPTASGKS). 16–21 (TASGKS) lines the substrate pocket. 2 interaction with substrate tRNA regions span residues 39 to 42 (DSVL) and 163 to 167 (QRIQR).

Belongs to the IPP transferase family. Monomer. Mg(2+) serves as cofactor.

The catalysed reaction is adenosine(37) in tRNA + dimethylallyl diphosphate = N(6)-dimethylallyladenosine(37) in tRNA + diphosphate. In terms of biological role, catalyzes the transfer of a dimethylallyl group onto the adenine at position 37 in tRNAs that read codons beginning with uridine, leading to the formation of N6-(dimethylallyl)adenosine (i(6)A). This is tRNA dimethylallyltransferase from Xylella fastidiosa (strain M12).